The chain runs to 951 residues: 2-oxoglutarate dehydrogenase E1 component (951 aa).

The tract at residues 906–925 is disordered; that stretch reads RRRRSSPAEGNPTAHKQEQA.

It belongs to the alpha-ketoglutarate dehydrogenase family. As to quaternary structure, homodimer. Part of the 2-oxoglutarate dehydrogenase (OGDH) complex composed of E1 (2-oxoglutarate dehydrogenase), E2 (dihydrolipoamide succinyltransferase) and E3 (dihydrolipoamide dehydrogenase); the complex contains multiple copies of the three enzymatic components (E1, E2 and E3). The cofactor is thiamine diphosphate.

It catalyses the reaction N(6)-[(R)-lipoyl]-L-lysyl-[protein] + 2-oxoglutarate + H(+) = N(6)-[(R)-S(8)-succinyldihydrolipoyl]-L-lysyl-[protein] + CO2. E1 component of the 2-oxoglutarate dehydrogenase (OGDH) complex which catalyzes the decarboxylation of 2-oxoglutarate, the first step in the conversion of 2-oxoglutarate to succinyl-CoA and CO(2). The polypeptide is 2-oxoglutarate dehydrogenase E1 component (Exiguobacterium sp. (strain ATCC BAA-1283 / AT1b)).